Here is a 153-residue protein sequence, read N- to C-terminus: Aspartate carbamoyltransferase regulatory chain (153 aa).

4 residues coordinate Zn(2+): Cys109, Cys114, Cys138, and Cys141.

The protein belongs to the PyrI family. As to quaternary structure, contains catalytic and regulatory chains. Requires Zn(2+) as cofactor.

Involved in allosteric regulation of aspartate carbamoyltransferase. This is Aspartate carbamoyltransferase regulatory chain from Salmonella schwarzengrund (strain CVM19633).